A 204-amino-acid polypeptide reads, in one-letter code: Inactive ribonuclease-like protein 9 (204 aa).

An N-terminal signal peptide occupies residues M1 to F26. 3 disulfide bridges follow: C97/C152, C115/C167, and C122/C129. N130 and N142 each carry an N-linked (GlcNAc...) asparagine glycan.

It belongs to the pancreatic ribonuclease family.

The protein resides in the secreted. Functionally, does not exhibit any ribonuclease activity. This Symphalangus syndactylus (Siamang) protein is Inactive ribonuclease-like protein 9 (RNASE9).